Consider the following 267-residue polypeptide: MIILIDSGNSRLKVGWFDPDAPQAAREPAPVAFDNLDLDALGRWLATLPRRPQRALGVNVAGLARGQAIAATLRAGGCDIRWLRAQPLAMGLRNGYRNPDQLGADRWACMVGVLARQPSVHPPLLVASFGTATTLDTIGPDNVFPGGLILPGPAMMRGALAHGTAHLPLADGLVADYPIDTHQAIASGIAAAQAGAIVRQWLAGRQRYGQAPEIYVAGGGWPEVRQEAERLLAVTGAAFGATPRPTYLDSPVLDGLAALAAHGAPTA.

6-13 (DSGNSRLK) is a binding site for ATP. Substrate is bound by residues Y96 and 103 to 106 (GADR). The active-site Proton acceptor is D105. T131 is an ATP binding site. Substrate is bound at residue T181.

Belongs to the type III pantothenate kinase family. In terms of assembly, homodimer. NH4(+) is required as a cofactor. The cofactor is K(+).

It is found in the cytoplasm. It catalyses the reaction (R)-pantothenate + ATP = (R)-4'-phosphopantothenate + ADP + H(+). Its pathway is cofactor biosynthesis; coenzyme A biosynthesis; CoA from (R)-pantothenate: step 1/5. Functionally, catalyzes the phosphorylation of pantothenate (Pan), the first step in CoA biosynthesis. The polypeptide is Type III pantothenate kinase (Bordetella bronchiseptica (strain ATCC BAA-588 / NCTC 13252 / RB50) (Alcaligenes bronchisepticus)).